Consider the following 362-residue polypeptide: B3 domain-containing protein IDEF1 (362 aa).

The interval 30–91 is disordered; the sequence is VPFPNPFPAP…TPTPTPRGFA (62 aa). Residues 48 to 70 show a composition bias toward basic residues; sequence PHNHNHNHNHNHNIHNSHNHNHN. A DNA-binding region (TF-B3) is located at residues 253–355; that stretch reads LRKELTKSDV…KFIIRGEKAI (103 aa).

In terms of processing, polyubiquitinated. Ubiquitination leads to its subsequent degradation via the proteasome pathway. As to expression, expressed in roots.

It localises to the nucleus. Functionally, transcription regulator involved in iron deficiency response and tolerance. May regulate directly iron transporters or other transcription factors involved in iron-deficiency response. Binds specifically to the DNA sequence 5'-CATGC-3' of the IDE1 element found in the promoter of the barley iron deficiency-inducible gene IDS2. The chain is B3 domain-containing protein IDEF1 (IDEF1) from Oryza sativa subsp. japonica (Rice).